Reading from the N-terminus, the 315-residue chain is Methionyl-tRNA formyltransferase (315 aa).

Position 113–116 (113–116 (SLLP)) interacts with (6S)-5,6,7,8-tetrahydrofolate.

It belongs to the Fmt family.

The catalysed reaction is L-methionyl-tRNA(fMet) + (6R)-10-formyltetrahydrofolate = N-formyl-L-methionyl-tRNA(fMet) + (6S)-5,6,7,8-tetrahydrofolate + H(+). Functionally, attaches a formyl group to the free amino group of methionyl-tRNA(fMet). The formyl group appears to play a dual role in the initiator identity of N-formylmethionyl-tRNA by promoting its recognition by IF2 and preventing the misappropriation of this tRNA by the elongation apparatus. The chain is Methionyl-tRNA formyltransferase from Yersinia enterocolitica serotype O:8 / biotype 1B (strain NCTC 13174 / 8081).